Reading from the N-terminus, the 63-residue chain is Kappa-theraphotoxin-Cg3a 1 (63 aa).

The signal sequence occupies residues 1 to 21 (MKNTSILFILGLALLLVLAFE). Positions 22 to 29 (VQVGESDG) are excised as a propeptide. Disulfide bonds link C31-C46, C38-C51, and C45-C58.

The protein belongs to the neurotoxin 10 (Hwtx-1) family. 44 (Jztx-4) subfamily. As to expression, expressed by the venom gland.

The protein resides in the secreted. Gating modifier of Kv2.1/KCNB1, Kv2.2/KCNB2 and Kv4.3/KCND3 channels. This Chilobrachys guangxiensis (Chinese earth tiger tarantula) protein is Kappa-theraphotoxin-Cg3a 1.